A 432-amino-acid polypeptide reads, in one-letter code: Adenylosuccinate synthetase (432 aa).

GTP contacts are provided by residues 12–18 (GDEGKGK) and 40–42 (GHT). Residue D13 is the Proton acceptor of the active site. Residues D13 and G40 each contribute to the Mg(2+) site. IMP-binding positions include 13–16 (DEGK), 38–41 (NAGH), T132, R146, Q226, T241, and R305. The active-site Proton donor is the H41. Residue 301 to 307 (TVTGRKR) participates in substrate binding. GTP-binding positions include R307, 333–335 (KLD), and 415–417 (STS).

This sequence belongs to the adenylosuccinate synthetase family. In terms of assembly, homodimer. Mg(2+) is required as a cofactor.

Its subcellular location is the cytoplasm. The enzyme catalyses IMP + L-aspartate + GTP = N(6)-(1,2-dicarboxyethyl)-AMP + GDP + phosphate + 2 H(+). It participates in purine metabolism; AMP biosynthesis via de novo pathway; AMP from IMP: step 1/2. In terms of biological role, plays an important role in the de novo pathway of purine nucleotide biosynthesis. Catalyzes the first committed step in the biosynthesis of AMP from IMP. In Sinorhizobium medicae (strain WSM419) (Ensifer medicae), this protein is Adenylosuccinate synthetase.